The primary structure comprises 368 residues: MKIETKIAKFTKPLYLESGRILEPWQIIYETYGELNEKKDNVILITHALSGSHHAAGMYEGDRKPGWWDGLIGDGKAIDTTKYFVISTNVIGSCFGSTSPMSPIHPGSSERYRLKFPVVTIKDMVKAQKILLDSLGIRHLKAIVGGSMGGMQALRFAVDFPGFCENIIPIATTYQTKPYVIAINKSMIEAIRADSEFKNGNYDPDIIKQNGLKGLAAARMIGYLNYISPKTFERKFGREYVKTDGMFELFGRFQVESYLEYNGAMFPKWFDPLSYIYILKAISLFDISRGFVSLEDAFSQIKDKLHLISFSGDTLFFPEEMRDIKNYMDKVGGKCNYFEINSDYGHDSFLVELEKFDFIISDILKGEV.

In terms of domain architecture, AB hydrolase-1 spans 41-352 (NVILITHALS…DYGHDSFLVE (312 aa)). Ser147 (nucleophile) is an active-site residue. Arg219 contributes to the substrate binding site. Catalysis depends on residues Asp313 and His346. Substrate is bound at residue Asp347.

The protein belongs to the AB hydrolase superfamily. MetX family. In terms of assembly, homodimer.

The protein localises to the cytoplasm. The catalysed reaction is L-homoserine + acetyl-CoA = O-acetyl-L-homoserine + CoA. The protein operates within amino-acid biosynthesis; L-methionine biosynthesis via de novo pathway; O-acetyl-L-homoserine from L-homoserine: step 1/1. Its function is as follows. Transfers an acetyl group from acetyl-CoA to L-homoserine, forming acetyl-L-homoserine. In Nautilia profundicola (strain ATCC BAA-1463 / DSM 18972 / AmH), this protein is Homoserine O-acetyltransferase.